The sequence spans 76 residues: UPF0270 protein PSPA7_1664 (76 aa).

This sequence belongs to the UPF0270 family.

The protein is UPF0270 protein PSPA7_1664 of Pseudomonas paraeruginosa (strain DSM 24068 / PA7) (Pseudomonas aeruginosa (strain PA7)).